The primary structure comprises 442 residues: Trigger factor (442 aa).

The 86-residue stretch at 163–248 folds into the PPIase FKBP-type domain; sequence GDQVVIDFLG…IKEVKAPKAA (86 aa).

This sequence belongs to the FKBP-type PPIase family. Tig subfamily.

It is found in the cytoplasm. The catalysed reaction is [protein]-peptidylproline (omega=180) = [protein]-peptidylproline (omega=0). Involved in protein export. Acts as a chaperone by maintaining the newly synthesized protein in an open conformation. Functions as a peptidyl-prolyl cis-trans isomerase. This chain is Trigger factor, found in Dinoroseobacter shibae (strain DSM 16493 / NCIMB 14021 / DFL 12).